Here is a 1527-residue protein sequence, read N- to C-terminus: Peroxidasin (1527 aa).

A signal peptide spans 1–23 (MRFMLLMLQLLGLLLLLAGGVQS). Residues 24–53 (VYCPAGCTCLERTVRCIRAKLSAVPKLPQD) enclose the LRRNT domain. 6 LRR repeats span residues 51 to 74 (PQDTQTLDLRFNHIEELPANAFSG), 75 to 98 (LAQLTTLFLNDNELAYLQDGALNG), 99 to 122 (LTALRFVYLNNNRLSRLPATIFQR), 124 to 146 (PRLEAIFLENNDIWQLPAGLFDN), 147 to 170 (LPRLNRLIMYNNKLTQLPVDGFNR), and 172 to 196 (NNLKRLRLDGNAIDCNCGVYSLWRR). Ig-like C2-type domains lie at 236 to 322 (PQFL…QPVR), 365 to 453 (PHFT…ARIE), 458 to 545 (PEIL…ATIK), and 553 to 643 (PQLA…ALVT). 4 cysteine pairs are disulfide-bonded: cysteine 257/cysteine 307, cysteine 388/cysteine 437, cysteine 479/cysteine 529, and cysteine 574/cysteine 627. Residue asparagine 419 is glycosylated (N-linked (GlcNAc...) asparagine). N-linked (GlcNAc...) asparagine glycosylation is found at asparagine 616, asparagine 673, asparagine 682, asparagine 731, and asparagine 767. Residues cysteine 768 and cysteine 784 are joined by a disulfide bond. Aspartate 862 is a heme b binding site. Catalysis depends on histidine 863, which acts as the Proton acceptor. Aspartate 864 contacts Ca(2+). Intrachain disulfides connect cysteine 882/cysteine 892 and cysteine 886/cysteine 909. Ca(2+) is bound by residues threonine 941, tyrosine 943, aspartate 945, and serine 947. An N-linked (GlcNAc...) asparagine glycan is attached at asparagine 962. A disulfide bridge connects residues cysteine 994 and cysteine 1005. Residues glutamate 1015 and histidine 1109 each coordinate heme b. Residues asparagine 1120 and asparagine 1213 are each glycosylated (N-linked (GlcNAc...) asparagine). 2 disulfides stabilise this stretch: cysteine 1212-cysteine 1269 and cysteine 1310-cysteine 1336. Positions 1403-1441 (NEERVSGLEELIGSFQKELKKLHKKLRKLEDSCNSADSE) form a coiled coil. Positions 1463–1524 (SHCVDDKGTT…PPEACCPHCP (62 aa)) constitute a VWFC domain.

Belongs to the peroxidase family. XPO subfamily. Homotrimer; disulfide-linked. The cofactor is Ca(2+). Heme b is required as a cofactor. In terms of tissue distribution, expressed in hemocytes. Also expressed in the fat body and gastric caeca.

It is found in the secreted. It catalyses the reaction (5R)-5-hydroxy-L-lysyl-[collagen] + L-methionyl-[collagen] + H2O2 = [collagen]-(5R)-5-hydroxy-L-lysyl-N-S-L-methionyl-[collagen] + 2 H2O + H(+). It carries out the reaction bromide + H2O2 = hypobromite + H2O. The catalysed reaction is (5R)-5-hydroxy-L-lysyl-[collagen] + L-methionyl-[collagen] + hypobromite = [collagen]-(5R)-5-hydroxy-L-lysyl-N-S-L-methionyl-[collagen] + bromide + H2O + H(+). The enzyme catalyses L-lysyl-[collagen] + L-methionyl-[collagen] + H2O2 = [collagen]-L-lysyl-N-S-L-methionyl-[collagen] + 2 H2O + H(+). It catalyses the reaction L-lysyl-[collagen] + L-methionyl-[collagen] + hypobromite = [collagen]-L-lysyl-N-S-L-methionyl-[collagen] + bromide + H2O + H(+). It carries out the reaction L-tyrosyl-[protein] + bromide + H2O2 + H(+) = 3-bromo-L-tyrosyl-[protein] + 2 H2O. The catalysed reaction is hypobromite + L-tyrosyl-[protein] + H(+) = 3-bromo-L-tyrosyl-[protein] + H2O. Its function is as follows. Catalyzes the two-electron oxidation of bromide by hydrogen peroxide and generates hypobromite as a reactive intermediate which mediates the formation of sulfilimine cross-links between methionine and hydroxylysine residues within an uncross-linked collagen IV NC1 hexamer. Plays a role in extracellular matrix consolidation, phagocytosis and defense. The protein is Peroxidasin of Drosophila melanogaster (Fruit fly).